The chain runs to 234 residues: Large ribosomal subunit protein uL1 (234 aa).

It belongs to the universal ribosomal protein uL1 family. Part of the 50S ribosomal subunit.

Its function is as follows. Binds directly to 23S rRNA. The L1 stalk is quite mobile in the ribosome, and is involved in E site tRNA release. Functionally, protein L1 is also a translational repressor protein, it controls the translation of the L11 operon by binding to its mRNA. This Wolinella succinogenes (strain ATCC 29543 / DSM 1740 / CCUG 13145 / JCM 31913 / LMG 7466 / NCTC 11488 / FDC 602W) (Vibrio succinogenes) protein is Large ribosomal subunit protein uL1.